Here is a 428-residue protein sequence, read N- to C-terminus: Trigger factor (428 aa).

A PPIase FKBP-type domain is found at 163-248 (GDTAVIDFEG…VHEIKEKRLP (86 aa)).

The protein belongs to the FKBP-type PPIase family. Tig subfamily.

The protein localises to the cytoplasm. The enzyme catalyses [protein]-peptidylproline (omega=180) = [protein]-peptidylproline (omega=0). Involved in protein export. Acts as a chaperone by maintaining the newly synthesized protein in an open conformation. Functions as a peptidyl-prolyl cis-trans isomerase. In Geobacillus sp. (strain WCH70), this protein is Trigger factor.